Consider the following 201-residue polypeptide: Thioredoxin reductase-like selenoprotein T (201 aa).

An N-terminal signal peptide occupies residues 1 to 26 (MARSSGPLCLLLLGGLVAGILSGASA). Residues 51-54 (CVSU) constitute a cross-link (cysteinyl-selenocysteine (Cys-Sec)). Residue Sec-54 is a non-standard amino acid, selenocysteine. A helical membrane pass occupies residues 96–116 (VFKLVLIGLIIAGKDPFAFFG).

The protein belongs to the SelWTH family. Selenoprotein T subfamily. May contain a selenide-sulfide bond between Cys-51 and Sec-54. This bond is speculated to serve as redox-active pair.

The protein localises to the endoplasmic reticulum membrane. The enzyme catalyses [thioredoxin]-dithiol + NADP(+) = [thioredoxin]-disulfide + NADPH + H(+). Functionally, selenoprotein with thioredoxin reductase-like oxidoreductase activity. The protein is Thioredoxin reductase-like selenoprotein T (selenot) of Xenopus tropicalis (Western clawed frog).